The primary structure comprises 89 residues: Small ribosomal subunit protein uS14 (89 aa).

This sequence belongs to the universal ribosomal protein uS14 family. In terms of assembly, part of the 30S ribosomal subunit. Contacts proteins S3 and S10.

Functionally, binds 16S rRNA, required for the assembly of 30S particles and may also be responsible for determining the conformation of the 16S rRNA at the A site. The polypeptide is Small ribosomal subunit protein uS14 (Akkermansia muciniphila (strain ATCC BAA-835 / DSM 22959 / JCM 33894 / BCRC 81048 / CCUG 64013 / CIP 107961 / Muc)).